The chain runs to 73 residues: Large ribosomal subunit protein bL31 (73 aa).

Belongs to the bacterial ribosomal protein bL31 family. Type A subfamily. Part of the 50S ribosomal subunit.

In terms of biological role, binds the 23S rRNA. This is Large ribosomal subunit protein bL31 from Dinoroseobacter shibae (strain DSM 16493 / NCIMB 14021 / DFL 12).